Reading from the N-terminus, the 445-residue chain is Neuropeptide Y receptor type 5 (445 aa).

At 1–42 (MDLELDEYYNKTLATENNTAATRNSDFPVWDDYKSSVDDLQY) the chain is on the extracellular side. N-linked (GlcNAc...) asparagine glycosylation is found at N10 and N17. The helical transmembrane segment at 43-63 (FLIGLYTFVSLLGFMGNLLIL) threads the bilayer. Residues 64–77 (MALMKKRNQKTTVN) are Cytoplasmic-facing. Residues 78–98 (FLIGNLAFSDILVVLFCSPFT) traverse the membrane as a helical segment. The Extracellular portion of the chain corresponds to 99–117 (LTSVLLDQWMFGKVMCHIM). The cysteines at positions 114 and 198 are disulfide-linked. The chain crosses the membrane as a helical span at residues 118 to 138 (PFLQCVSVLVSTLILISIAIV). Residues 139–156 (RYHMIKHPISNNLTANHG) lie on the Cytoplasmic side of the membrane. The helical transmembrane segment at 157–177 (YFLIATVWTLGFAICSPLPVF) threads the bilayer. Residues 178-208 (HSLVELQETFGSALLSSRYLCVESWPSDSYR) are Extracellular-facing. A helical transmembrane segment spans residues 209–229 (IAFTISLLLVQYILPLVCLTV). The Cytoplasmic portion of the chain corresponds to 230 to 369 (SHTSVCRSIS…KKRSRSVFYR (140 aa)). Residues 370 to 390 (LTILILVFAVSWMPLHLFHVV) traverse the membrane as a helical segment. At 391–407 (TDFNDNLISNRHFKLVY) the chain is on the extracellular side. The helical transmembrane segment at 408–428 (CICHLLGMMSCCLNPILYGFL) threads the bilayer. Residues 429 to 445 (NNGIKADLVSLIHCLHM) lie on the Cytoplasmic side of the membrane. The S-palmitoyl cysteine moiety is linked to residue C442.

This sequence belongs to the G-protein coupled receptor 1 family. As to expression, brain; hypothalamus.

The protein localises to the cell membrane. Receptor for neuropeptide Y and peptide YY. The activity of this receptor is mediated by G proteins that inhibit adenylate cyclase activity. Seems to be associated with food intake. Could be involved in feeding disorders. In Homo sapiens (Human), this protein is Neuropeptide Y receptor type 5 (NPY5R).